We begin with the raw amino-acid sequence, 278 residues long: Putative carbamate hydrolase RutD (278 aa).

This sequence belongs to the AB hydrolase superfamily. Hydrolase RutD family.

The enzyme catalyses carbamate + 2 H(+) = NH4(+) + CO2. In terms of biological role, involved in pyrimidine catabolism. May facilitate the hydrolysis of carbamate, a reaction that can also occur spontaneously. In Yersinia enterocolitica serotype O:8 / biotype 1B (strain NCTC 13174 / 8081), this protein is Putative carbamate hydrolase RutD.